The following is a 342-amino-acid chain: Holliday junction branch migration complex subunit RuvB (342 aa).

The interval 1–185 (MREDYLKSDD…FGINARLEYY (185 aa)) is large ATPase domain (RuvB-L). ATP-binding positions include L24, R25, G66, K69, T70, T71, 132–134 (EDY), R175, Y185, and R222. T70 serves as a coordination point for Mg(2+). The segment at 186 to 256 (DAKLLTRIVQ…IARIALQALN (71 aa)) is small ATPAse domain (RuvB-S). A head domain (RuvB-H) region spans residues 259–342 (HNGLDDMDNR…PPAQSGTLFE (84 aa)). R314 and R319 together coordinate DNA.

The protein belongs to the RuvB family. Homohexamer. Forms an RuvA(8)-RuvB(12)-Holliday junction (HJ) complex. HJ DNA is sandwiched between 2 RuvA tetramers; dsDNA enters through RuvA and exits via RuvB. An RuvB hexamer assembles on each DNA strand where it exits the tetramer. Each RuvB hexamer is contacted by two RuvA subunits (via domain III) on 2 adjacent RuvB subunits; this complex drives branch migration. In the full resolvosome a probable DNA-RuvA(4)-RuvB(12)-RuvC(2) complex forms which resolves the HJ.

Its subcellular location is the cytoplasm. It catalyses the reaction ATP + H2O = ADP + phosphate + H(+). Its function is as follows. The RuvA-RuvB-RuvC complex processes Holliday junction (HJ) DNA during genetic recombination and DNA repair, while the RuvA-RuvB complex plays an important role in the rescue of blocked DNA replication forks via replication fork reversal (RFR). RuvA specifically binds to HJ cruciform DNA, conferring on it an open structure. The RuvB hexamer acts as an ATP-dependent pump, pulling dsDNA into and through the RuvAB complex. RuvB forms 2 homohexamers on either side of HJ DNA bound by 1 or 2 RuvA tetramers; 4 subunits per hexamer contact DNA at a time. Coordinated motions by a converter formed by DNA-disengaged RuvB subunits stimulates ATP hydrolysis and nucleotide exchange. Immobilization of the converter enables RuvB to convert the ATP-contained energy into a lever motion, pulling 2 nucleotides of DNA out of the RuvA tetramer per ATP hydrolyzed, thus driving DNA branch migration. The RuvB motors rotate together with the DNA substrate, which together with the progressing nucleotide cycle form the mechanistic basis for DNA recombination by continuous HJ branch migration. Branch migration allows RuvC to scan DNA until it finds its consensus sequence, where it cleaves and resolves cruciform DNA. This is Holliday junction branch migration complex subunit RuvB from Cytophaga hutchinsonii (strain ATCC 33406 / DSM 1761 / CIP 103989 / NBRC 15051 / NCIMB 9469 / D465).